Reading from the N-terminus, the 637-residue chain is 1-deoxy-D-xylulose-5-phosphate synthase (637 aa).

Thiamine diphosphate-binding positions include His-72 and 113–115 (GHA). Asp-144 contacts Mg(2+). Thiamine diphosphate contacts are provided by residues 145–146 (GA), Asn-174, Tyr-287, and Glu-370. Position 174 (Asn-174) interacts with Mg(2+).

It belongs to the transketolase family. DXPS subfamily. Homodimer. Mg(2+) is required as a cofactor. It depends on thiamine diphosphate as a cofactor.

It carries out the reaction D-glyceraldehyde 3-phosphate + pyruvate + H(+) = 1-deoxy-D-xylulose 5-phosphate + CO2. It participates in metabolic intermediate biosynthesis; 1-deoxy-D-xylulose 5-phosphate biosynthesis; 1-deoxy-D-xylulose 5-phosphate from D-glyceraldehyde 3-phosphate and pyruvate: step 1/1. In terms of biological role, catalyzes the acyloin condensation reaction between C atoms 2 and 3 of pyruvate and glyceraldehyde 3-phosphate to yield 1-deoxy-D-xylulose-5-phosphate (DXP). In Prochlorococcus marinus subsp. pastoris (strain CCMP1986 / NIES-2087 / MED4), this protein is 1-deoxy-D-xylulose-5-phosphate synthase.